A 106-amino-acid polypeptide reads, in one-letter code: Guanylate cyclase activator 2B (106 aa).

Positions Met-1–Gly-21 are cleaved as a signal peptide. Positions Val-22–Ala-91 are excised as a propeptide. 3 cysteine pairs are disulfide-bonded: Cys-62/Cys-75, Cys-95/Cys-103, and Cys-98/Cys-106.

The protein belongs to the guanylin family. Localized predominantly in intestinal villi and the corticomedullary junction of the kidney.

Its subcellular location is the secreted. Functionally, endogenous activator of intestinal guanylate cyclase. It stimulates this enzyme through the same receptor binding region as the heat-stable enterotoxins. May be a potent physiological regulator of intestinal fluid and electrolyte transport. May be an autocrine/paracrine regulator of intestinal salt and water transport. The chain is Guanylate cyclase activator 2B (Guca2b) from Mus musculus (Mouse).